The following is a 405-amino-acid chain: Zinc finger protein ubi-d4 (405 aa).

Disordered stretches follow at residues 80–147 (RKKR…GEFP), 165–194 (DDLD…GGAR), 210–230 (ACDN…VCGK), and 248–280 (AEEE…PDGL). Basic and acidic residues-rich tracts occupy residues 100 to 110 (PDTDQTLKKEG) and 126 to 140 (DPLE…RMDD). Residues 165-174 (DDLDDEDYEE) are compositionally biased toward acidic residues. Residues 209 to 246 (YACDNSYKQKHSLKPPDRVCGKRYKNRPGLSYHYAHSH) form a C2H2-type; atypical zinc finger. Positions 267–277 (RSEEQKSKKGP) are enriched in basic and acidic residues. PHD-type zinc fingers lie at residues 284–344 (NNYC…CKCC) and 341–391 (CKCC…CLDL).

Belongs to the requiem/DPF family.

The protein resides in the cytoplasm. Its subcellular location is the nucleus. Functionally, may be a transcription factor required for the apoptosis response following survival factor withdrawal from myeloid cells. Might also have a role in the development and maturation of lymphoid cells. This is Zinc finger protein ubi-d4 (REQ) from Gallus gallus (Chicken).